A 350-amino-acid chain; its full sequence is MPVLHNRISNDELKAKMLAESEPRTTISFYKYFTIASPQQTRDALYQVFTALDVFGRVYLAHEGINAQISVPQSKVETFRQQLYTFDPALDGVRLNIALEDDGKSFWVLRMKVRDRIVADGIDDPSFDASNVGDYLKAADVNAMLDDPDAVFIDMRNHYEYEVGHFENALEIPADTFREQLPKAVEMLREHADKKIVMYCTGGIRCEKASAWMKHNGFNKVWHIEGGIIEYARRAREQGLPVRFIGKNFVFDERMGERISDEVIAHCHQCGVSCDSHTNCKNDGCHLLFIQCPQCASKFNGCCSEQCCEELALPEEEQRRRRAGRENGNKIFNKSRGRLNSKLSIPDPAE.

Residues 146-240 (DDPDAVFIDM…YARRAREQGL (95 aa)) form the Rhodanese domain. Residue Cys-200 is the Cysteine persulfide intermediate of the active site. Positions 319–328 (RRRRAGRENG) are enriched in basic and acidic residues. The interval 319-350 (RRRRAGRENGNKIFNKSRGRLNSKLSIPDPAE) is disordered.

The protein belongs to the TrhO family.

It catalyses the reaction uridine(34) in tRNA + AH2 + O2 = 5-hydroxyuridine(34) in tRNA + A + H2O. Catalyzes oxygen-dependent 5-hydroxyuridine (ho5U) modification at position 34 in tRNAs. In Salmonella typhi, this protein is tRNA uridine(34) hydroxylase.